The sequence spans 125 residues: Protein ApaG (125 aa).

An ApaG domain is found at 3 to 125 (TAVTEGIEVT…FPLVVPGSLN (123 aa)).

This is Protein ApaG from Anaeromyxobacter dehalogenans (strain 2CP-1 / ATCC BAA-258).